A 459-amino-acid chain; its full sequence is Alcohol acyl transferase 2 (459 aa).

Catalysis depends on proton acceptor residues His164 and Asn385.

The protein belongs to the plant acyltransferase family. As to expression, highly expressed in the cortex and skin of ripe fruit.

In terms of biological role, involved in the biosynthesis of volatile esters which confer ripe apple fruit flavor. Alcohol acyl transferase that can use a wide range of alcohols as substrate to produce esters. This chain is Alcohol acyl transferase 2, found in Malus domestica (Apple).